We begin with the raw amino-acid sequence, 343 residues long: Ribosomal RNA small subunit methyltransferase C (343 aa).

The protein belongs to the methyltransferase superfamily. RsmC family. As to quaternary structure, monomer.

The protein resides in the cytoplasm. The catalysed reaction is guanosine(1207) in 16S rRNA + S-adenosyl-L-methionine = N(2)-methylguanosine(1207) in 16S rRNA + S-adenosyl-L-homocysteine + H(+). Specifically methylates the guanine in position 1207 of 16S rRNA in the 30S particle. The protein is Ribosomal RNA small subunit methyltransferase C of Shigella boydii serotype 4 (strain Sb227).